A 634-amino-acid chain; its full sequence is Chaperone protein dnaK2 (634 aa).

Threonine 197 carries the phosphothreonine; by autocatalysis modification. Residues 601-623 (GAAAAESGADAGAAGAGDSSSGD) are compositionally biased toward low complexity. The disordered stretch occupies residues 601 to 634 (GAAAAESGADAGAAGAGDSSSGDDVIDAEFTESK). The segment covering 624 to 634 (DVIDAEFTESK) has biased composition (acidic residues).

It belongs to the heat shock protein 70 family.

Acts as a chaperone. In Prochlorococcus marinus (strain MIT 9313), this protein is Chaperone protein dnaK2 (dnaK2).